A 195-amino-acid chain; its full sequence is PRELI domain containing protein 3B (195 aa).

A PRELI/MSF1 domain is found at 1–172 (MKIWTSEHVF…VIHKLNAEIE (172 aa)). Phosphoserine occurs at positions 46 and 51.

The protein belongs to the slowmo family.

This chain is PRELI domain containing protein 3B (PRELID3B), found in Cricetulus griseus (Chinese hamster).